Reading from the N-terminus, the 432-residue chain is Enolase (432 aa).

Gln-167 lines the (2R)-2-phosphoglycerate pocket. Catalysis depends on Glu-209, which acts as the Proton donor. Mg(2+) contacts are provided by Asp-246, Glu-291, and Asp-318. (2R)-2-phosphoglycerate-binding residues include Lys-343, Arg-372, Ser-373, and Lys-394. The Proton acceptor role is filled by Lys-343.

Belongs to the enolase family. Component of the RNA degradosome, a multiprotein complex involved in RNA processing and mRNA degradation. Mg(2+) is required as a cofactor.

The protein localises to the cytoplasm. It localises to the secreted. Its subcellular location is the cell surface. It carries out the reaction (2R)-2-phosphoglycerate = phosphoenolpyruvate + H2O. It participates in carbohydrate degradation; glycolysis; pyruvate from D-glyceraldehyde 3-phosphate: step 4/5. In terms of biological role, catalyzes the reversible conversion of 2-phosphoglycerate (2-PG) into phosphoenolpyruvate (PEP). It is essential for the degradation of carbohydrates via glycolysis. This chain is Enolase, found in Aliivibrio fischeri (strain MJ11) (Vibrio fischeri).